The sequence spans 668 residues: Packaging protein UL32 homolog (668 aa).

A compositionally biased stretch (polar residues) spans 1–10 (MNPSTHVSSN). A disordered region spans residues 1 to 35 (MNPSTHVSSNGPTTPPHGPHTTFLPPTSPAPSTSS). The span at 19–35 (PHTTFLPPTSPAPSTSS) shows a compositional bias: low complexity. Zn(2+) is bound by residues Cys200, Cys203, His276, and Cys282. The zinc finger 1 stretch occupies residues 200-282 (CNLCAIISIC…FHLHFFINRC (83 aa)). 2 stretches are compositionally biased toward basic and acidic residues: residues 392-401 (SEREDARMMM) and 410-419 (GEKGGDDPGR). The segment at 392–430 (SEREDARMMMEEEEDEEGGEKGGDDPGRHNGGGTSGGFS) is disordered. Residues Cys459, Cys462, His567, and Cys574 each coordinate Zn(2+). The zinc finger 2 stretch occupies residues 459–574 (CLLCELMACS…YKHFFCDPQC (116 aa)).

It belongs to the herpesviridae UL32 protein family.

It localises to the host cytoplasm. The protein resides in the host nucleus. Plays a role in efficient localization of neo-synthesized capsids to nuclear replication compartments, thereby controlling cleavage and packaging of virus genomic DNA. In Homo sapiens (Human), this protein is Packaging protein UL32 homolog (UL52).